Here is a 302-residue protein sequence, read N- to C-terminus: uncharacterized protein (302 aa).

The active site involves E47.

The protein belongs to the PhzF family.

This is an uncharacterized protein from Mesorhizobium japonicum (strain LMG 29417 / CECT 9101 / MAFF 303099) (Mesorhizobium loti (strain MAFF 303099)).